Reading from the N-terminus, the 201-residue chain is ATP-dependent Clp protease proteolytic subunit (201 aa).

Residue S98 is the Nucleophile of the active site. Residue H123 is part of the active site.

This sequence belongs to the peptidase S14 family. In terms of assembly, fourteen ClpP subunits assemble into 2 heptameric rings which stack back to back to give a disk-like structure with a central cavity, resembling the structure of eukaryotic proteasomes.

The protein localises to the cytoplasm. It carries out the reaction Hydrolysis of proteins to small peptides in the presence of ATP and magnesium. alpha-casein is the usual test substrate. In the absence of ATP, only oligopeptides shorter than five residues are hydrolyzed (such as succinyl-Leu-Tyr-|-NHMec, and Leu-Tyr-Leu-|-Tyr-Trp, in which cleavage of the -Tyr-|-Leu- and -Tyr-|-Trp bonds also occurs).. Functionally, cleaves peptides in various proteins in a process that requires ATP hydrolysis. Has a chymotrypsin-like activity. Plays a major role in the degradation of misfolded proteins. The polypeptide is ATP-dependent Clp protease proteolytic subunit (Rickettsia typhi (strain ATCC VR-144 / Wilmington)).